The following is a 317-amino-acid chain: WSCD family member CG9164 (317 aa).

Residues 8-28 (FFGVSATIIIYIGGVLFLSMN) traverse the membrane as a helical segment. N-linked (GlcNAc...) asparagine glycans are attached at residues Asn151, Asn227, and Asn233.

It belongs to the WSCD family.

It is found in the membrane. The polypeptide is WSCD family member CG9164 (Drosophila melanogaster (Fruit fly)).